A 1418-amino-acid chain; its full sequence is Protein ced-11 (1418 aa).

7 helical membrane passes run 617–637 (FPIF…IIPV), 755–775 (YWLS…SVVL), 782–802 (LWDT…CFVL), 818–838 (VFDV…KVFP), 856–876 (VVSA…YIPL), 898–918 (FLFM…AVVF), and 986–1006 (IVIE…FAFF).

It localises to the membrane. Its function is as follows. Plays a major role in programmed cell death. The sequence is that of Protein ced-11 (ced-11) from Caenorhabditis elegans.